Reading from the N-terminus, the 259-residue chain is Phosphate import ATP-binding protein PstB (259 aa).

An ABC transporter domain is found at 10–254; the sequence is AESRNLSFYY…PSRKETEDYI (245 aa). Residue 43 to 50 participates in ATP binding; that stretch reads GPSGCGKS.

This sequence belongs to the ABC transporter superfamily. Phosphate importer (TC 3.A.1.7) family. As to quaternary structure, the complex is composed of two ATP-binding proteins (PstB), two transmembrane proteins (PstC and PstA) and a solute-binding protein (PstS).

It is found in the cell inner membrane. The enzyme catalyses phosphate(out) + ATP + H2O = ADP + 2 phosphate(in) + H(+). Its function is as follows. Part of the ABC transporter complex PstSACB involved in phosphate import. Responsible for energy coupling to the transport system. The protein is Phosphate import ATP-binding protein PstB of Methylobacillus flagellatus (strain ATCC 51484 / DSM 6875 / VKM B-1610 / KT).